A 245-amino-acid polypeptide reads, in one-letter code: tRNA1(Val) (adenine(37)-N6)-methyltransferase (245 aa).

Belongs to the methyltransferase superfamily. tRNA (adenine-N(6)-)-methyltransferase family.

The protein localises to the cytoplasm. It carries out the reaction adenosine(37) in tRNA1(Val) + S-adenosyl-L-methionine = N(6)-methyladenosine(37) in tRNA1(Val) + S-adenosyl-L-homocysteine + H(+). Its function is as follows. Specifically methylates the adenine in position 37 of tRNA(1)(Val) (anticodon cmo5UAC). This Salmonella arizonae (strain ATCC BAA-731 / CDC346-86 / RSK2980) protein is tRNA1(Val) (adenine(37)-N6)-methyltransferase.